Consider the following 485-residue polypeptide: MEKSWFNFLFSKGELEYRCELSKSMDSFAPIEKTTDRVIYDTDKNLYDWGERSSYYNNVDLLVSSKDIRNFISDDTFFVRDSNKNSYSIYFDIQNQKFEIDNGLSDLEVFFYSYRSSSYLNNRSKSDNDPHYDPSIKDTKYDCNNHINSCIDSYFRSHICIDSHFLSDSKNYNESYIYNLICSKSGKIRESQNYKIRTNMNRSDLIKDFDITQNYNQLWIQCDNCYALIYKKALKFKMNVCEQCGYYLKISSSDRIELSIDPGTWNPMDEDMVSTDPIQFHSREEPYQNRIDSAQKKTGLTDAVQTGTGQLNGIPVALGVMDFQFMGGSMGSVVGEKITRLIEYATTEFLPLILVCSSGGARMQEGSLSLMQMAKISSVLCDYQSSKKLFYISILTSPTTGGVTASFGMLGDIIIAEPYAYIAFAGKRVIEQTLKKAVPEGSQAAESLLRKGLLDAIVPRNPLKGVLTELFQLHAFFPLNKNEIK.

Residues Leu218–Lys485 form the CoA carboxyltransferase N-terminal domain. Positions 222, 225, 241, and 244 each coordinate Zn(2+). The C4-type zinc-finger motif lies at Cys222–Cys244.

It belongs to the AccD/PCCB family. As to quaternary structure, acetyl-CoA carboxylase is a heterohexamer composed of biotin carboxyl carrier protein, biotin carboxylase and 2 subunits each of ACCase subunit alpha and ACCase plastid-coded subunit beta (accD). The cofactor is Zn(2+).

The protein localises to the plastid. The protein resides in the chloroplast stroma. It carries out the reaction N(6)-carboxybiotinyl-L-lysyl-[protein] + acetyl-CoA = N(6)-biotinyl-L-lysyl-[protein] + malonyl-CoA. The protein operates within lipid metabolism; malonyl-CoA biosynthesis; malonyl-CoA from acetyl-CoA: step 1/1. Functionally, component of the acetyl coenzyme A carboxylase (ACC) complex. Biotin carboxylase (BC) catalyzes the carboxylation of biotin on its carrier protein (BCCP) and then the CO(2) group is transferred by the transcarboxylase to acetyl-CoA to form malonyl-CoA. The polypeptide is Acetyl-coenzyme A carboxylase carboxyl transferase subunit beta, chloroplastic (Aethionema cordifolium (Lebanon stonecress)).